A 72-amino-acid chain; its full sequence is Large ribosomal subunit protein bL31 (72 aa).

4 residues coordinate Zn(2+): C16, C18, C38, and C41.

Belongs to the bacterial ribosomal protein bL31 family. Type A subfamily. In terms of assembly, part of the 50S ribosomal subunit. Requires Zn(2+) as cofactor.

Functionally, binds the 23S rRNA. This Azoarcus sp. (strain BH72) protein is Large ribosomal subunit protein bL31.